A 207-amino-acid chain; its full sequence is Small ribosomal subunit protein uS4c (207 aa).

Residues 92–156 (MRLDNILFRL…YQSIITKRIE (65 aa)) enclose the S4 RNA-binding domain.

It belongs to the universal ribosomal protein uS4 family. Part of the 30S ribosomal subunit. Contacts protein S5. The interaction surface between S4 and S5 is involved in control of translational fidelity.

The protein resides in the plastid. It localises to the chloroplast. Functionally, one of the primary rRNA binding proteins, it binds directly to 16S rRNA where it nucleates assembly of the body of the 30S subunit. In terms of biological role, with S5 and S12 plays an important role in translational accuracy. The polypeptide is Small ribosomal subunit protein uS4c (rps4) (Equisetum sylvaticum (Wood horsetail)).